We begin with the raw amino-acid sequence, 102 residues long: MAKQKIRIKLKGFDHKILDQSALQIVEALERTGATISGPVPLPTRIQRYSVIRASFIDKDSQEQFEIRTHKRLIDIVETTSKTIDALTNLNLPAGVSIDIKL.

Belongs to the universal ribosomal protein uS10 family. As to quaternary structure, part of the 30S ribosomal subunit.

In terms of biological role, involved in the binding of tRNA to the ribosomes. The chain is Small ribosomal subunit protein uS10 from Dehalococcoides mccartyi (strain ATCC BAA-2100 / JCM 16839 / KCTC 5957 / BAV1).